Consider the following 334-residue polypeptide: N-acetyl-gamma-glutamyl-phosphate reductase (334 aa).

Cys-154 is an active-site residue.

This sequence belongs to the NAGSA dehydrogenase family. Type 1 subfamily.

It localises to the cytoplasm. The enzyme catalyses N-acetyl-L-glutamate 5-semialdehyde + phosphate + NADP(+) = N-acetyl-L-glutamyl 5-phosphate + NADPH + H(+). The protein operates within amino-acid biosynthesis; L-arginine biosynthesis; N(2)-acetyl-L-ornithine from L-glutamate: step 3/4. Its function is as follows. Catalyzes the NADPH-dependent reduction of N-acetyl-5-glutamyl phosphate to yield N-acetyl-L-glutamate 5-semialdehyde. This chain is N-acetyl-gamma-glutamyl-phosphate reductase, found in Vibrio parahaemolyticus serotype O3:K6 (strain RIMD 2210633).